A 480-amino-acid chain; its full sequence is Zinc finger protein ztf-6 (480 aa).

4 disordered regions span residues 92 to 160 (CHDS…TMMV), 174 to 198 (GTNGSSNSNTTSSSKSPQEEEEEHD), 282 to 307 (LDAGSSENDGSTSSSQPSPPADPTAS), and 328 to 351 (DANTSSADQKAAARKRKSTPMKVP). Low complexity-rich tracts occupy residues 95–105 (SATSTTTTVSH), 131–145 (SSIESRSIRSVSSSV), 174–187 (GTNGSSNSNTTSSS), and 286–296 (SSENDGSTSSS). C2H2-type zinc fingers lie at residues 359 to 383 (YICPMDGCNKVFKEKGSVHRHFVTH) and 388 to 410 (FNCDKCKASYTQKHALMLHQKIH). The segment at 416 to 441 (YQCRGCGTNYTTQNGLRLHRQRNPAC) adopts a C2H2-type 3; degenerate zinc-finger fold. The interval 461 to 480 (ALSGPLSKNSSPTKQMVSAP) is disordered.

Probable transcription factor, involved in regulation of dopamine neuron lineage specification. May play a role in maintaining robustness of the Wnt/beta-catenin asymmetry pathway. The polypeptide is Zinc finger protein ztf-6 (Caenorhabditis elegans).